Reading from the N-terminus, the 291-residue chain is Nucleoid occlusion protein (291 aa).

Residues 155–174 (EALAQRLGKGQSTVANKLRL) constitute a DNA-binding region (H-T-H motif).

The protein belongs to the ParB family.

The protein localises to the cytoplasm. Its subcellular location is the nucleoid. Effects nucleoid occlusion by binding relatively nonspecifically to DNA and preventing the assembly of the division machinery in the vicinity of the nucleoid, especially under conditions that disturb the cell cycle. It helps to coordinate cell division and chromosome segregation by preventing the formation of the Z ring through the nucleoid, which would cause chromosome breakage. The chain is Nucleoid occlusion protein from Bacillus pumilus (strain SAFR-032).